Consider the following 381-residue polypeptide: Transcriptional regulatory protein FlgR (381 aa).

The region spanning 2-113 (KIAIVEDDIN…LLLESIYRTK (112 aa)) is the Response regulatory domain. At D51 the chain carries 4-aspartylphosphate. Residues 136-365 (FLAASKALEE…LLGVVERAAI (230 aa)) enclose the Sigma-54 factor interaction domain. Residues 164–171 (GESGVGKE) and 227–236 (ANKGTIFLDE) contribute to the ATP site.

Phosphorylated by FlgS.

Its function is as follows. Member of the two-component regulatory system FlgR/FlgS that induces the transcriptional induction of the genes needed in motility and flagellar biogenesis. Upon phosphorylation by FlgS, functions as a transcriptional regulator and activates transcription of RpoN-dependent flagellar genes. The chain is Transcriptional regulatory protein FlgR (flgR) from Helicobacter pylori (strain ATCC 700392 / 26695) (Campylobacter pylori).